We begin with the raw amino-acid sequence, 67 residues long: Large ribosomal subunit protein bL35 (67 aa).

This sequence belongs to the bacterial ribosomal protein bL35 family.

In Acidiphilium cryptum (strain JF-5), this protein is Large ribosomal subunit protein bL35.